Here is a 301-residue protein sequence, read N- to C-terminus: Ribosomal RNA small subunit methyltransferase A (301 aa).

Positions 23, 25, 50, 72, 97, and 149 each coordinate S-adenosyl-L-methionine.

This sequence belongs to the class I-like SAM-binding methyltransferase superfamily. rRNA adenine N(6)-methyltransferase family. RsmA subfamily.

It localises to the cytoplasm. The enzyme catalyses adenosine(1518)/adenosine(1519) in 16S rRNA + 4 S-adenosyl-L-methionine = N(6)-dimethyladenosine(1518)/N(6)-dimethyladenosine(1519) in 16S rRNA + 4 S-adenosyl-L-homocysteine + 4 H(+). Functionally, specifically dimethylates two adjacent adenosines (A1518 and A1519) in the loop of a conserved hairpin near the 3'-end of 16S rRNA in the 30S particle. May play a critical role in biogenesis of 30S subunits. The protein is Ribosomal RNA small subunit methyltransferase A of Rickettsia peacockii (strain Rustic).